The chain runs to 233 residues: Homeobox protein not2 (233 aa).

Residues 135–194 (LKRIRTVFTPEQLERLEKEFLKQQYMVGTERVDLASTLNLTETQVKVWFQNRRIKWRKQS) constitute a DNA-binding region (homeobox). A disordered region spans residues 212–233 (SSDHTDDSRETEEEEDDVDVEL). The segment covering 220-233 (RETEEEEDDVDVEL) has biased composition (acidic residues).

Localized to the dorsal lip of the blastopore (Spemann organizer) during early gastrulation, after which expression continues in tissues derived from the organizer. Expressed in the notochord during mid-gastrulation, the chordoneural hinge, notochord and ventral spinal cord of the tailbud at stage 22, and finally the tip of the tail in the tadpole (stage 35).

It is found in the nucleus. In terms of biological role, transcriptional repressor. Plays a fundamental role in notochord formation, acting within the mesodermal region. Acts downstream of gsc and upstream of chrd and foxa4-A/pintallavis. The protein is Homeobox protein not2 of Xenopus laevis (African clawed frog).